A 617-amino-acid chain; its full sequence is ATP-dependent zinc metalloprotease FtsH (617 aa).

Residues 1-7 lie on the Cytoplasmic side of the membrane; that stretch reads MKIPFDR. Residues 8–28 form a helical membrane-spanning segment; the sequence is WLGWPTLLLLLLGLWLLGSSL. The Periplasmic segment spans residues 29-102; the sequence is RDQRTVEAVP…VSYRRVRESN (74 aa). A helical transmembrane segment spans residues 103-123; that stretch reads WLSQLLSWMAGPLLLLGFWYF. Topologically, residues 124-617 are cytoplasmic; it reads MSRRIDGQQG…GRPAAIRQVA (494 aa). ATP is bound at residue 198–205; it reads GPTGTGKT. His-421 is a Zn(2+) binding site. The active site involves Glu-422. Zn(2+) is bound by residues His-425 and Asp-498.

It in the central section; belongs to the AAA ATPase family. The protein in the C-terminal section; belongs to the peptidase M41 family. In terms of assembly, homohexamer. It depends on Zn(2+) as a cofactor.

It is found in the cell inner membrane. Acts as a processive, ATP-dependent zinc metallopeptidase for both cytoplasmic and membrane proteins. Plays a role in the quality control of integral membrane proteins. This is ATP-dependent zinc metalloprotease FtsH from Methylibium petroleiphilum (strain ATCC BAA-1232 / LMG 22953 / PM1).